We begin with the raw amino-acid sequence, 316 residues long: 1-aminocyclopropane-1-carboxylate oxidase 4 (316 aa).

The Fe2OG dioxygenase domain maps to 153–253 (PNFGTKVSNY…RMSLASFYNP (101 aa)). Fe cation is bound by residues His177, Asp179, and His234.

The protein belongs to the iron/ascorbate-dependent oxidoreductase family. Fe cation is required as a cofactor. Expressed in all of the floral organs examined apart from the sepals.

It catalyses the reaction 1-aminocyclopropane-1-carboxylate + L-ascorbate + O2 = ethene + L-dehydroascorbate + hydrogen cyanide + CO2 + 2 H2O. It functions in the pathway alkene biosynthesis; ethylene biosynthesis via S-adenosyl-L-methionine; ethylene from S-adenosyl-L-methionine: step 2/2. The polypeptide is 1-aminocyclopropane-1-carboxylate oxidase 4 (ACO4) (Solanum lycopersicum (Tomato)).